Consider the following 559-residue polypeptide: Potassium-transporting ATPase potassium-binding subunit (559 aa).

A run of 12 helical transmembrane segments spans residues G5 to M25, L63 to L83, V131 to L151, I173 to G193, V254 to V274, A282 to E302, F327 to V347, A356 to V376, G379 to G399, M416 to M436, L483 to I503, and A525 to P545.

The protein belongs to the KdpA family. As to quaternary structure, the system is composed of three essential subunits: KdpA, KdpB and KdpC.

The protein localises to the cell inner membrane. Its function is as follows. Part of the high-affinity ATP-driven potassium transport (or Kdp) system, which catalyzes the hydrolysis of ATP coupled with the electrogenic transport of potassium into the cytoplasm. This subunit binds the periplasmic potassium ions and delivers the ions to the membrane domain of KdpB through an intramembrane tunnel. This is Potassium-transporting ATPase potassium-binding subunit from Klebsiella pneumoniae subsp. pneumoniae (strain ATCC 700721 / MGH 78578).